The primary structure comprises 166 residues: Putative peroxisomal peroxiredoxin (166 aa).

One can recognise a Thioredoxin domain in the interval 5-166; the sequence is FPEDVKFLYI…SGVDAVLAAL (162 aa). The Cysteine sulfenic acid (-SOH) intermediate role is filled by cysteine 56.

This sequence belongs to the peroxiredoxin family. Prx5 subfamily. In terms of assembly, homodimer; disulfide-linked, upon oxidation.

It catalyses the reaction a hydroperoxide + [protein]-dithiol = [protein]-disulfide + an alcohol + H2O. Thiol-specific peroxidase that catalyzes the reduction of hydrogen peroxide and organic hydroperoxides to water and alcohols, respectively. Plays a role in cell protection against oxidative stress by detoxifying peroxides and as sensor of hydrogen peroxide-mediated signaling events. This is Putative peroxisomal peroxiredoxin from Lipomyces kononenkoae (Yeast).